Reading from the N-terminus, the 313-residue chain is Pyrimidine-specific ribonucleoside hydrolase RihB (313 aa).

Catalysis depends on aspartate 11, which acts as the Proton acceptor. Ca(2+) contacts are provided by aspartate 11, aspartate 16, and valine 124. Substrate is bound by residues glutamine 227 and histidine 239. A Ca(2+)-binding site is contributed by aspartate 240.

Belongs to the IUNH family. RihB subfamily. As to quaternary structure, homotetramer. Ca(2+) is required as a cofactor.

It catalyses the reaction a pyrimidine ribonucleoside + H2O = a pyrimidine nucleobase + D-ribose. In terms of biological role, hydrolyzes cytidine or uridine to ribose and cytosine or uracil, respectively. Has a clear preference for cytidine over uridine. Strictly specific for ribonucleosides. The chain is Pyrimidine-specific ribonucleoside hydrolase RihB from Escherichia coli O157:H7.